A 118-amino-acid polypeptide reads, in one-letter code: Ribosome-binding factor A (118 aa).

Belongs to the RbfA family. In terms of assembly, monomer. Binds 30S ribosomal subunits, but not 50S ribosomal subunits or 70S ribosomes.

The protein resides in the cytoplasm. One of several proteins that assist in the late maturation steps of the functional core of the 30S ribosomal subunit. Associates with free 30S ribosomal subunits (but not with 30S subunits that are part of 70S ribosomes or polysomes). Required for efficient processing of 16S rRNA. May interact with the 5'-terminal helix region of 16S rRNA. The sequence is that of Ribosome-binding factor A from Dehalococcoides mccartyi (strain ATCC BAA-2100 / JCM 16839 / KCTC 5957 / BAV1).